Reading from the N-terminus, the 217-residue chain is Protein GrpE (217 aa).

Acidic residues-rich tracts occupy residues 1–28 (MSDD…EGDD), 136–152 (DILD…DPGT), and 204–217 (SEAE…DGDE). Disordered stretches follow at residues 1–44 (MSDD…NDPA), 135–157 (DDIL…TDPK), and 193–217 (QVTV…DGDE).

It belongs to the GrpE family. Homodimer.

It is found in the cytoplasm. Its function is as follows. Participates actively in the response to hyperosmotic and heat shock by preventing the aggregation of stress-denatured proteins, in association with DnaK and GrpE. It is the nucleotide exchange factor for DnaK and may function as a thermosensor. Unfolded proteins bind initially to DnaJ; upon interaction with the DnaJ-bound protein, DnaK hydrolyzes its bound ATP, resulting in the formation of a stable complex. GrpE releases ADP from DnaK; ATP binding to DnaK triggers the release of the substrate protein, thus completing the reaction cycle. Several rounds of ATP-dependent interactions between DnaJ, DnaK and GrpE are required for fully efficient folding. The polypeptide is Protein GrpE (Natronomonas pharaonis (strain ATCC 35678 / DSM 2160 / CIP 103997 / JCM 8858 / NBRC 14720 / NCIMB 2260 / Gabara) (Halobacterium pharaonis)).